The chain runs to 613 residues: MGKVVGIDLGTTNSVVAAIEGGQPSVIINAEGLRTTPSIVAYTKKEELLVGQIAKRQAVINPENTFFSVKRFIGSKEGEISKEAKKLPYKVSNDQNNNIKIKCPALNRDFSPEEISAQVLRKLINDATDYLGQEVTQAVITVPAYFNDSQRQATMDAGKIAGVEVLRIINEPTAASLAYGLDKKQNETILVFDLGGGTFDVSILEVGDGIFEVLSTAGDTNLGGDDFDNVLVNWLINDFKEKNNIDLGNDVQALQRLTEAAEKAKVELSTVEKTTIHLPFITADKTGPKHIEQELTRDVFENLCQALINRCRIPVEKSLNDARLDKADINEIVLVGGSTRIPAVQNLVESLTGKKPNQSVNPDEVVAIGAAIQAGILAGEIKDILLLDVTPLSLGVETLGGVMTKIIARNTTIPVKKSEMFSTAVDNQTNVEIHILQGERELVAGNKSLGNFRLDGIPAADRGAPQIEVTFDIDVDGILSVKAREKETGVEQAVTIQGASNLNEKEVEEMLVEAEKFASADKVKRENIDVKNQAEALCFEAEKEVSSFNDTVPENKKQNIKTLIENIRQAVQTDNFETLKEQMEELKTAMKDIVALKSTNDTATDPMSNLNDL.

It belongs to the heat shock protein 70 family.

It is found in the plastid. The protein resides in the chloroplast. Its function is as follows. Acts as a chaperone. This chain is Chaperone protein dnaK, found in Phaeodactylum tricornutum (strain CCAP 1055/1).